Reading from the N-terminus, the 2188-residue chain is Tiggrin (2188 aa).

The first 18 residues, Met1–Gly18, serve as a signal peptide directing secretion. Coiled-coil stretches lie at residues Ser570–Lys635, Leu1009–Ser1050, Thr1312–Glu1343, and Lys1613–His1641. The segment at Ile1984–Gly2188 is disordered. The span at Phe1985–Asp1998 shows a compositional bias: basic and acidic residues. The Cell attachment site signature appears at Arg1989–Asp1991. Acidic residues predominate over residues Ser2000–Leu2009. Pro residues predominate over residues Pro2016–Pro2033. Composition is skewed to low complexity over residues Gly2057–Ser2077 and Gln2091–Gln2101. The span at Gly2115–Gln2139 shows a compositional bias: polar residues. The span at Gln2148–Gln2165 shows a compositional bias: low complexity. The segment covering Phe2179–Gly2188 has biased composition (basic and acidic residues).

Post-translationally, O-glycosylation by pgant3 is required for proper secretion and localization to the basal cell layer interface during wing development. As to expression, in embryos, expressed in the apodemes (muscle attachment sites) of the major longitudinal muscles 4, 6, 7, 12 and 13 and the wide dorsal oblique muscles 9 and 10, in hemocytes, in fat body cells, in basement membranes surrounding the gut and in the commissures of the ventral nerve cord. Expressed in larval imaginal wing disk and in pupal wing. In adult flies, expressed in the jump muscle (at protein level).

The protein resides in the secreted. It is found in the extracellular space. It localises to the extracellular matrix. Functionally, functions as a ligand for integrin alpha-PS2/beta-PS. Required in larvae for proper muscle structure and function. Involved in the regulation of cell adhesion during wing development. In Drosophila melanogaster (Fruit fly), this protein is Tiggrin.